Consider the following 403-residue polypeptide: D-galactonate dehydratase family member ManD (403 aa).

Substrate-binding residues include Asn37 and His122. The active-site Proton donor/acceptor is Tyr159. Asp211 contributes to the Mg(2+) binding site. The active-site Proton donor/acceptor is His213. Mg(2+) is bound by residues Glu237 and Glu263. Residues Glu263, Arg284, His313, Asp317, and Glu340 each contribute to the substrate site.

The protein belongs to the mandelate racemase/muconate lactonizing enzyme family. GalD subfamily. It depends on Mg(2+) as a cofactor.

The catalysed reaction is D-mannonate = 2-dehydro-3-deoxy-D-gluconate + H2O. It catalyses the reaction D-gluconate = 2-dehydro-3-deoxy-D-gluconate + H2O. Functionally, has low dehydratase activity with D-mannonate and D-gluconate, suggesting that these are not physiological substrates and that it has no significant role in the in vivo degradation of these compounds. Has no detectable activity with a panel of 70 other acid sugars (in vitro). This chain is D-galactonate dehydratase family member ManD (manD), found in Chromohalobacter salexigens (strain ATCC BAA-138 / DSM 3043 / CIP 106854 / NCIMB 13768 / 1H11).